The primary structure comprises 378 residues: Protein arginine N-methyltransferase 6 (378 aa).

The interval 1 to 46 (MSLSKKRKLESGDSGGAGAGGEGAEEENGGEQEAAPPRPRRTKSER) is disordered. Residues 13 to 22 (DSGGAGAGGE) show a composition bias toward gly residues. Arg-38 carries the asymmetric dimethylarginine; by autocatalysis modification. An SAM-dependent MTase PRMT-type domain is found at 47–377 (DQLYYECYSD…EEKTKDFAME (331 aa)). The S-adenosyl-L-methionine site is built by His-60, Arg-69, Gly-93, Glu-115, and Glu-144. Active-site residues include Glu-158 and Glu-167.

Belongs to the class I-like SAM-binding methyltransferase superfamily. Protein arginine N-methyltransferase family. PRMT6 subfamily. As to quaternary structure, interacts with (and methylates) HIV-1 Tat, Rev and Nucleocapsid protein p7 (NC). Interacts with EPB41L3 and NCOA1. Automethylation enhances its stability.

It is found in the nucleus. It carries out the reaction L-arginyl-[protein] + 2 S-adenosyl-L-methionine = N(omega),N(omega)-dimethyl-L-arginyl-[protein] + 2 S-adenosyl-L-homocysteine + 2 H(+). Its function is as follows. Arginine methyltransferase that can catalyze the formation of both omega-N monomethylarginine (MMA) and asymmetrical dimethylarginine (aDMA), with a strong preference for the formation of aDMA. Preferentially methylates arginyl residues present in a glycine and arginine-rich domain and displays preference for monomethylated substrates. Specifically mediates the asymmetric dimethylation of histone H3 'Arg-2' to form H3R2me2a. H3R2me2a represents a specific tag for epigenetic transcriptional repression and is mutually exclusive with methylation on histone H3 'Lys-4' (H3K4me2 and H3K4me3). Acts as a transcriptional repressor of various genes such as HOXA2, THBS1 and TP53. Repression of TP53 blocks cellular senescence. Also methylates histone H2A and H4 'Arg-3' (H2AR3me and H4R3me, respectively). Acts as a regulator of DNA base excision during DNA repair by mediating the methylation of DNA polymerase beta (POLB), leading to the stimulation of its polymerase activity by enhancing DNA binding and processivity. Methylates HMGA1. Regulates alternative splicing events. Acts as a transcriptional coactivator of a number of steroid hormone receptors including ESR1, ESR2, PGR and NR3C1. Promotes fasting-induced transcriptional activation of the gluconeogenic program through methylation of the CRTC2 transcription coactivator. Methylates GPS2, protecting GPS2 from ubiquitination and degradation. Methylates SIRT7, inhibiting SIRT7 histone deacetylase activity and promoting mitochondria biogenesis. This Mus musculus (Mouse) protein is Protein arginine N-methyltransferase 6 (Prmt6).